We begin with the raw amino-acid sequence, 183 residues long: Inosine triphosphate pyrophosphatase (183 aa).

8-13 serves as a coordination point for ITP; the sequence is TGNKNK. Position 36 (Glu-36) interacts with Mg(2+). ITP is bound by residues Lys-48, 64-65, Lys-81, 140-143, Lys-161, and 166-167; these read DT, FGWD, and HR.

The protein belongs to the HAM1 NTPase family. Homodimer. It depends on Mg(2+) as a cofactor. The cofactor is Mn(2+).

The protein localises to the cytoplasm. Its subcellular location is the nucleus. It carries out the reaction ITP + H2O = IMP + diphosphate + H(+). The catalysed reaction is dITP + H2O = dIMP + diphosphate + H(+). The enzyme catalyses XTP + H2O = XMP + diphosphate + H(+). Its function is as follows. Pyrophosphatase that hydrolyzes non-canonical purine nucleotides such as inosine triphosphate (ITP), deoxyinosine triphosphate (dITP) or xanthosine 5'-triphosphate (XTP) to their respective monophosphate derivatives. The enzyme does not distinguish between the deoxy- and ribose forms. Probably excludes non-canonical purines from RNA and DNA precursor pools, thus preventing their incorporation into RNA and DNA and avoiding chromosomal lesions. This Emericella nidulans (strain FGSC A4 / ATCC 38163 / CBS 112.46 / NRRL 194 / M139) (Aspergillus nidulans) protein is Inosine triphosphate pyrophosphatase.